Consider the following 399-residue polypeptide: UDP-N-acetylglucosamine--N-acetylmuramyl-(pentapeptide) pyrophosphoryl-undecaprenol N-acetylglucosamine transferase (399 aa).

Basic residues predominate over residues 1-21; the sequence is MTSRFGHSHHPRRGRSARARA. Residues 1-30 form a disordered region; the sequence is MTSRFGHSHHPRRGRSARARAGRREGVQSN. UDP-N-acetyl-alpha-D-glucosamine contacts are provided by residues 58-60, Asn-170, Arg-206, Ser-234, Ile-288, and Gln-333; that span reads TGG.

It belongs to the glycosyltransferase 28 family. MurG subfamily.

The protein localises to the cell inner membrane. The catalysed reaction is di-trans,octa-cis-undecaprenyl diphospho-N-acetyl-alpha-D-muramoyl-L-alanyl-D-glutamyl-meso-2,6-diaminopimeloyl-D-alanyl-D-alanine + UDP-N-acetyl-alpha-D-glucosamine = di-trans,octa-cis-undecaprenyl diphospho-[N-acetyl-alpha-D-glucosaminyl-(1-&gt;4)]-N-acetyl-alpha-D-muramoyl-L-alanyl-D-glutamyl-meso-2,6-diaminopimeloyl-D-alanyl-D-alanine + UDP + H(+). The protein operates within cell wall biogenesis; peptidoglycan biosynthesis. Cell wall formation. Catalyzes the transfer of a GlcNAc subunit on undecaprenyl-pyrophosphoryl-MurNAc-pentapeptide (lipid intermediate I) to form undecaprenyl-pyrophosphoryl-MurNAc-(pentapeptide)GlcNAc (lipid intermediate II). The protein is UDP-N-acetylglucosamine--N-acetylmuramyl-(pentapeptide) pyrophosphoryl-undecaprenol N-acetylglucosamine transferase of Acidovorax ebreus (strain TPSY) (Diaphorobacter sp. (strain TPSY)).